Reading from the N-terminus, the 203-residue chain is Cytochrome c oxidase assembly protein CtaG (203 aa).

Residues 1-16 (MADQQEKDQKLKKQQR) are Cytoplasmic-facing. The helical; Signal-anchor for type II membrane protein transmembrane segment at 17-39 (SNATIAFACLSFFVCMIGAAYAS) threads the bilayer. Over 40 to 203 (VPLYRIFCQV…VKAETPTNGS (164 aa)) the chain is Periplasmic.

The protein belongs to the COX11/CtaG family.

Its subcellular location is the cell inner membrane. Exerts its effect at some terminal stage of cytochrome c oxidase synthesis, probably by being involved in the insertion of the copper B into subunit I. The sequence is that of Cytochrome c oxidase assembly protein CtaG from Brucella anthropi (strain ATCC 49188 / DSM 6882 / CCUG 24695 / JCM 21032 / LMG 3331 / NBRC 15819 / NCTC 12168 / Alc 37) (Ochrobactrum anthropi).